The following is an 84-amino-acid chain: MNRTRLFACLLLAVLILVHESNAQCRRLCYKQRCVTYCRGRGKRSLDETNVGTSDVEKRAFDDSNVPSLVEERELEDEGSFIFD.

The signal sequence occupies residues 1–23; it reads MNRTRLFACLLLAVLILVHESNA. Gln24 carries the post-translational modification Pyrrolidone carboxylic acid. 2 cysteine pairs are disulfide-bonded: Cys25–Cys38 and Cys29–Cys34. Arg41 bears the Arginine amide mark. The propeptide occupies 42-84; that stretch reads GKRSLDETNVGTSDVEKRAFDDSNVPSLVEERELEDEGSFIFD.

In terms of tissue distribution, in hemocytes only, but not in all hemocytes observed.

The protein resides in the secreted. Its function is as follows. Active against several Gram-positive bacteria such as Bacillus spp, Staphylococcus spp and E.faecalis, several Gram-negative bacteria such as E.coli, K.pneumoniae, P.aeruginosa and Salmonella spp, filamentous fungi such as N.crassa, T.viridae and yeasts such as C.albicans. It is active against the parasite L.amazonensis as well. It shows hemolytic activity. The sequence is that of Gomesin from Acanthoscurria gomesiana (Tarantula spider).